A 383-amino-acid polypeptide reads, in one-letter code: Neuropeptide Y receptor type 1 (383 aa).

Residues 1 to 44 (MNSTLSSQVENHSIYYNFSEKNSQFLAFENDDCHLPLAMIFTLA) lie on the Extracellular side of the membrane. Asn2, Asn11, and Asn17 each carry an N-linked (GlcNAc...) asparagine glycan. A helical membrane pass occupies residues 45 to 65 (LAYGAVIILGVSGNLALIIII). Residues 66–76 (LKQKEMRNVTN) lie on the Cytoplasmic side of the membrane. Residues 77-97 (ILIVNLSFSDLLVAIMCLPFT) traverse the membrane as a helical segment. The Extracellular portion of the chain corresponds to 98-116 (FVYTLMDHWVFGEVMCKLN). A disulfide bridge links Cys113 with Cys198. The helical transmembrane segment at 117–137 (PFVQCVSITVSIFSLVLIAVE) threads the bilayer. Over 138–154 (RHQLIINPRGWRPSNRH) the chain is Cytoplasmic. A helical membrane pass occupies residues 155 to 175 (AYVGIAVIWVLAVASSLPFLI). Residues 176–211 (YQVLTDEPFQNVTLDAFKDKYVCFDKFLSDSHRLSY) lie on the Extracellular side of the membrane. Residues 212–232 (TTLLLVLQYFGPLCFIFICYF) traverse the membrane as a helical segment. At 233–260 (KIYIRLKRRNNMMDKMRDNKYRSSETKR) the chain is on the cytoplasmic side. A helical membrane pass occupies residues 261 to 281 (INVMLLSIVVAFAVCWLPLTI). Residues 282 to 299 (FNTVFDWNHQIIATCNHN) are Extracellular-facing. The helical transmembrane segment at 300-320 (LLFLLCHLTAMISTCINPIFY) threads the bilayer. Residues 321 to 383 (GFLNKNFQRD…KIHSDDNEKI (63 aa)) lie on the Cytoplasmic side of the membrane. The S-palmitoyl cysteine moiety is linked to residue Cys338. Ser368 is subject to Phosphoserine.

It belongs to the G-protein coupled receptor 1 family.

It localises to the cell membrane. Its function is as follows. Receptor for neuropeptide Y and peptide YY. The sequence is that of Neuropeptide Y receptor type 1 (NPY1R) from Sus scrofa (Pig).